We begin with the raw amino-acid sequence, 324 residues long: DNA repair and recombination protein RadA (324 aa).

ATP is bound at residue 107-114 (GEFGSGKS).

The protein belongs to the eukaryotic RecA-like protein family.

Functionally, involved in DNA repair and in homologous recombination. Binds and assemble on single-stranded DNA to form a nucleoprotein filament. Hydrolyzes ATP in a ssDNA-dependent manner and promotes DNA strand exchange between homologous DNA molecules. This is DNA repair and recombination protein RadA from Methanoculleus marisnigri (strain ATCC 35101 / DSM 1498 / JR1).